Here is a 242-residue protein sequence, read N- to C-terminus: Small ribosomal subunit protein uS2 (242 aa).

This sequence belongs to the universal ribosomal protein uS2 family.

This chain is Small ribosomal subunit protein uS2, found in Vibrio vulnificus (strain CMCP6).